Here is a 549-residue protein sequence, read N- to C-terminus: MSPTISHKDSSRQRRPGNFSHSLDMKSGPLPPGGWDDSHLDSAGREGDREALLGDTGTGDFLKAPQSFRAELSSILLLLFLYVLQGIPLGLAGSIPLILQSKNVSYTDQAFFSFVFWPFSLKLLWAPLVDAVYVKNFGRRKSWLVPTQYILGLFMIYLSTQVDRLLGNTDDRTPDVIALTVAFFLFEFLAATQDIAVDGWALTMLSRENVGYASTCNSVGQTAGYFLGNVLFLALESADFCNKYLRFQPQPRGIVTLSDFLFFWGTVFLITTTLVALLKKENEVSVVKEETQGITDTYKLLFAIIKMPAVLTFCLLILTAKIGFSAADAVTGLKLVEEGVPKEHLALLAVPMVPLQIILPLIISKYTAGPQPLNTFYKAMPYRLLLGLEYALLVWWTPKVEHQGGFPIYYYIVVLLSYALHQVTVYSMYVSIMAFNAKVSDPLIGGTYMTLLNTVSNLGGNWPSTVALWLVDPLTVKECVGASNQNCRTPDAVELCKKLGGSCVTALDGYYVESIICVFIGFGWWFFLGPKFKKLQDEGSSSWKCKRNN.

Positions 1–12 (MSPTISHKDSSR) are enriched in basic and acidic residues. The interval 1–46 (MSPTISHKDSSRQRRPGNFSHSLDMKSGPLPPGGWDDSHLDSAGRE) is disordered. The Cytoplasmic portion of the chain corresponds to 1 to 74 (MSPTISHKDS…PQSFRAELSS (74 aa)). Phosphoserine is present on residues serine 22 and serine 42. Positions 36–46 (DDSHLDSAGRE) are enriched in basic and acidic residues. The chain crosses the membrane as a helical span at residues 75–95 (ILLLLFLYVLQGIPLGLAGSI). Topologically, residues 96 to 113 (PLILQSKNVSYTDQAFFS) are extracellular. Asparagine 103 carries N-linked (GlcNAc...) asparagine glycosylation. A helical membrane pass occupies residues 114–134 (FVFWPFSLKLLWAPLVDAVYV). Over 135-141 (KNFGRRK) the chain is Cytoplasmic. The chain crosses the membrane as a helical span at residues 142–162 (SWLVPTQYILGLFMIYLSTQV). The Extracellular segment spans residues 163–175 (DRLLGNTDDRTPD). The helical transmembrane segment at 176–196 (VIALTVAFFLFEFLAATQDIA) threads the bilayer. Topologically, residues 197–217 (VDGWALTMLSRENVGYASTCN) are cytoplasmic. The helical transmembrane segment at 218–238 (SVGQTAGYFLGNVLFLALESA) threads the bilayer. Topologically, residues 239 to 256 (DFCNKYLRFQPQPRGIVT) are extracellular. Residues 257 to 277 (LSDFLFFWGTVFLITTTLVAL) traverse the membrane as a helical segment. Topologically, residues 278–299 (LKKENEVSVVKEETQGITDTYK) are cytoplasmic. Residues 300 to 320 (LLFAIIKMPAVLTFCLLILTA) traverse the membrane as a helical segment. The Extracellular segment spans residues 321 to 343 (KIGFSAADAVTGLKLVEEGVPKE). Residues 344 to 364 (HLALLAVPMVPLQIILPLIIS) traverse the membrane as a helical segment. The Cytoplasmic segment spans residues 365-378 (KYTAGPQPLNTFYK). Residues 379–398 (AMPYRLLLGLEYALLVWWTP) traverse the membrane as a helical segment. Topologically, residues 399-404 (KVEHQG) are extracellular. A helical transmembrane segment spans residues 405–425 (GFPIYYYIVVLLSYALHQVTV). Over 426 to 508 (YSMYVSIMAF…LGGSCVTALD (83 aa)) the chain is Cytoplasmic. A helical membrane pass occupies residues 509–529 (GYYVESIICVFIGFGWWFFLG). Topologically, residues 530–549 (PKFKKLQDEGSSSWKCKRNN) are extracellular.

The protein belongs to the SLC33A transporter family. In terms of assembly, homodimerizes. As to expression, ubiquitous. Detected in heart, brain, placenta, lung, liver, skeletal muscle, kidney and pancreas. With strongest signals in pancreas.

The protein resides in the endoplasmic reticulum membrane. The enzyme catalyses acetyl-CoA(in) = acetyl-CoA(out). Its function is as follows. Acetyl-CoA transporter that mediates active acetyl-CoA import through the endoplasmic reticulum (ER) membrane into the ER lumen where specific ER-based acetyl-CoA:lysine acetyltransferases are responsible for the acetylation of ER-based protein substrates, such as BACE1. Necessary for O-acetylation of gangliosides. The protein is Acetyl-coenzyme A transporter 1 of Homo sapiens (Human).